The following is a 272-amino-acid chain: CD40 ligand (272 aa).

Residues 1 to 23 (MNEAYSPAAPRPMGSTSPSTMKM) lie on the Cytoplasmic side of the membrane. Residues 24-44 (FMCFLSVFMVVQTIGTVLFCL) traverse the membrane as a helical; Signal-anchor for type II membrane protein segment. The Extracellular portion of the chain corresponds to 45 to 272 (YLHMKMDKME…GNTYFGMFKL (228 aa)). N-linked (GlcNAc...) asparagine glycans are attached at residues asparagine 124 and asparagine 146. Residues 136-272 (IATHLAGVKS…GNTYFGMFKL (137 aa)) enclose the THD domain. The cysteines at positions 190 and 229 are disulfide-linked. An N-linked (GlcNAc...) asparagine glycan is attached at asparagine 251.

It belongs to the tumor necrosis factor family. As to quaternary structure, homotrimer. Interacts with CD28. CD40 ligand, soluble form: Exists as either a monomer or a homotrimer. Forms a ternary complex between CD40 and integrins for CD40-CD40LG signaling. The soluble form derives from the membrane form by proteolytic processing.

The protein resides in the cell membrane. The protein localises to the cell surface. It localises to the secreted. In terms of biological role, cytokine that acts as a ligand to CD40/TNFRSF5. Costimulates T-cell proliferation and cytokine production. Induces the activation of NF-kappa-B. Mediates B-cell proliferation in the absence of co-stimulus as well as IgE production in the presence of IL4. Involved in immunoglobulin class switching. Acts as a ligand for integrins, specifically ITGA5:ITGB1 and ITGAV:ITGB3; both integrins and the CD40 receptor are required for activation of CD40-CD40LG signaling, which have cell-type dependent effects, such as B-cell activation, NF-kappa-B signaling and anti-apoptotic signaling. The protein is CD40 ligand (CD40LG) of Gallus gallus (Chicken).